Consider the following 658-residue polypeptide: Translation factor GUF1, mitochondrial (658 aa).

Residues 1–40 (MRGCLQTVRWLTSAWQRPPSYPPLSRAAPCRFFNVSIPRN) constitute a mitochondrion transit peptide. The tr-type G domain occupies 60 to 240 (DRFRNFCIVA…TVVEQIPAPV (181 aa)). Residues 69–76 (AHVDHGKS), 133–137 (DTPGH), and 187–190 (NKVD) each bind GTP.

It belongs to the TRAFAC class translation factor GTPase superfamily. Classic translation factor GTPase family. LepA subfamily.

The protein localises to the mitochondrion inner membrane. The catalysed reaction is GTP + H2O = GDP + phosphate + H(+). Its function is as follows. Promotes mitochondrial protein synthesis. May act as a fidelity factor of the translation reaction, by catalyzing a one-codon backward translocation of tRNAs on improperly translocated ribosomes. Binds to mitochondrial ribosomes in a GTP-dependent manner. This is Translation factor GUF1, mitochondrial from Paracoccidioides brasiliensis (strain Pb18).